The sequence spans 790 residues: GATOR2 complex protein WDR24 (790 aa).

WD repeat units follow at residues 72-112 (SLNL…RNKQ), 118-158 (EHKR…SVST), 161-201 (GQSE…RCER), 205-245 (AHNG…AKEM), 249-291 (QTIA…VPAA), and 295-338 (EHRD…VERA). Ser155 carries the post-translational modification Phosphoserine; by AMPK. A phosphoserine mark is found at Ser470 and Ser496. Thr581 carries the post-translational modification Phosphothreonine. A phosphoserine mark is found at Ser594 and Ser598. A C4-type zinc finger spans residues 718 to 740 (NCSHCKRPMSSRGWVCDRCHRCA). Zn(2+) contacts are provided by Cys719, Cys722, Cys733, Cys736, Cys743, Cys746, Cys757, Cys760, His762, His765, His768, Cys779, Cys783, His785, and Cys787. Residues 741 to 790 (SMCAVCHHVVKGLFVWCQGCSHGGHLQHIMKWLEGSSHCPAGCGHLCEYS) form an RING-type; atypical zinc finger.

It belongs to the WD repeat WDR24 family. In terms of assembly, component of the GATOR2 subcomplex, composed of MIOS, SEC13, SEH1L, WDR24 and WDR59. The GATOR2 complex interacts with CASTOR1 and CASTOR2; the interaction is negatively regulated by arginine. The GATOR2 complex interacts with SESN1, SESN2 and SESN3; the interaction is negatively regulated by amino acids. SESN1, SESN2 and SESN3 convey leucine availability via direct interaction with SEH1L and WDR24. Post-translationally, phosphorylation at Ser-155 by AMPK in response to glucose deprivation inactivates WDR24 by promoting interaction with 14-3-3 proteins, such as YWHAG, preventing assembly of the GATOR2 complex. Autoubiquitinated; MIOS is required to prevent autoubiquitination.

It is found in the lysosome membrane. The enzyme catalyses S-ubiquitinyl-[E2 ubiquitin-conjugating enzyme]-L-cysteine + [acceptor protein]-L-lysine = [E2 ubiquitin-conjugating enzyme]-L-cysteine + N(6)-ubiquitinyl-[acceptor protein]-L-lysine.. The protein operates within protein modification; protein ubiquitination. With respect to regulation, the GATOR2 complex is negatively regulated by the upstream amino acid sensors CASTOR1 and SESN2, which sequester the GATOR2 complex in absence of amino acids. In the presence of abundant amino acids, GATOR2 is released from CASTOR1 and SESN2 and activated. Catalytic component of the GATOR2 complex, a multiprotein complex that acts as an activator of the amino acid-sensing branch of the mTORC1 signaling pathway. The GATOR2 complex indirectly activates mTORC1 through the inhibition of the GATOR1 subcomplex. GATOR2 probably acts as an E3 ubiquitin-protein ligase toward GATOR1. In the presence of abundant amino acids, the GATOR2 complex mediates ubiquitination of the NPRL2 core component of the GATOR1 complex, leading to GATOR1 inactivation. In the absence of amino acids, GATOR2 is inhibited, activating the GATOR1 complex. In addition to its role in regulation of the mTORC1 complex, promotes the acidification of lysosomes and facilitates autophagic flux. Within the GATOR2 complex, WDR24 constitutes the catalytic subunit that mediates 'Lys-6'-linked ubiquitination of NPRL2. The polypeptide is GATOR2 complex protein WDR24 (Homo sapiens (Human)).